The primary structure comprises 611 residues: MAFSQAALSALPLSDRTFRKKPSSSSSSSPNFVLRVRAAAKEVHFNRDGSVTKKLQAGADMVAKLLGVTLGPKGRNVVLQNKYGPPRIVNDGETVLKEIELEDPLENVGVKLVRQAGAKTNDLAGDGSTTSIILAHGLITEGIKVISAGTNPIQVARGIEKTTKALVLELKSMSREIEDHELAHVAAVSAGNDYEVGNMISNAFQQVGRTGVVTIEKGKYLVNNLEIVEGMQFNRGYLSPYFVTDRRKREAEFHDCKLLLVDKKITNPKDMFKILDSAVKEEFPVLIVAEDIEQDALAPVIRNKLKGNLKVAAIKAPAFGERKSHCLDDLAIFTGATVIRDEMGLSLEKAGKEVLGTAKRVLVTKDSTLIVTNGFTQKAVDERVSQIKNLIENTEENFQKKILNERVARLSGGIAIIQVGALTQVELKDKQLKVEDALNATKSAIEEGIVVGGGCALLRLATKVDRIKETLDNTEQKIGAEIFKKALSYPIRLIAKNADTNGNIVIEKVLSNKNTMYGYNAAKNQYEDLMLAGIIDPTKVVRCCLEHASSVAQTFLTSDCVVVEIKEIKPRPIINPPLPTSSPATSSMFPDRKLPRFPQIMPRTRSHFPRK.

The transit peptide at 1–37 directs the protein to the chloroplast; it reads MAFSQAALSALPLSDRTFRKKPSSSSSSSPNFVLRVR. A coiled-coil region spans residues 377 to 480; that stretch reads QKAVDERVSQ…LDNTEQKIGA (104 aa). A disordered region spans residues 574-595; the sequence is INPPLPTSSPATSSMFPDRKLP.

Belongs to the chaperonin (HSP60) family. Part of the Cpn60 complex composed of 7 alpha and 7 beta subunits. Can also form a complex composed of 14 beta subunits only. Both complexes show ATPase activity. The Cpn60 complex interacts with the Cpn10 complex. Interacts with NDHH.

The protein resides in the plastid. It is found in the chloroplast stroma. Its function is as follows. Involved specifically in the folding of NDHH, a subunit of the chloroplast NADH dehydrogenase-like complex (NDH). The polypeptide is Chaperonin 60 subunit beta 4, chloroplastic (CPN60B4) (Arabidopsis thaliana (Mouse-ear cress)).